Consider the following 225-residue polypeptide: 3-dehydroquinate dehydratase (225 aa).

3-dehydroquinate-binding positions include Ser6, 30–32 (EWR), and Arg62. His118 acts as the Proton donor/acceptor in catalysis. The active-site Schiff-base intermediate with substrate is the Lys143. 3 residues coordinate 3-dehydroquinate: Arg186, Ser205, and Gln209.

Belongs to the type-I 3-dehydroquinase family. In terms of assembly, homodimer.

The enzyme catalyses 3-dehydroquinate = 3-dehydroshikimate + H2O. Its pathway is metabolic intermediate biosynthesis; chorismate biosynthesis; chorismate from D-erythrose 4-phosphate and phosphoenolpyruvate: step 3/7. In terms of biological role, involved in the third step of the chorismate pathway, which leads to the biosynthesis of aromatic amino acids. Catalyzes the cis-dehydration of 3-dehydroquinate (DHQ) and introduces the first double bond of the aromatic ring to yield 3-dehydroshikimate. This Streptococcus sanguinis (strain SK36) protein is 3-dehydroquinate dehydratase.